A 186-amino-acid polypeptide reads, in one-letter code: Lipoprotein signal peptidase (186 aa).

The next 3 membrane-spanning stretches (helical) occupy residues 11–31, 44–64, and 70–90; these read WIPL…KLLV, VLGD…FSIG, and VLRT…IVFS. Catalysis depends on residues Asp128 and Asp150. A helical transmembrane segment spans residues 145–165; the sequence is AFNIADAVIMTCGLLLIISFI.

Belongs to the peptidase A8 family.

It is found in the cell inner membrane. It carries out the reaction Release of signal peptides from bacterial membrane prolipoproteins. Hydrolyzes -Xaa-Yaa-Zaa-|-(S,diacylglyceryl)Cys-, in which Xaa is hydrophobic (preferably Leu), and Yaa (Ala or Ser) and Zaa (Gly or Ala) have small, neutral side chains.. The protein operates within protein modification; lipoprotein biosynthesis (signal peptide cleavage). Functionally, this protein specifically catalyzes the removal of signal peptides from prolipoproteins. The protein is Lipoprotein signal peptidase of Treponema pallidum (strain Nichols).